Consider the following 449-residue polypeptide: Trigger factor (449 aa).

The region spanning 173-258 is the PPIase FKBP-type domain; sequence GDRVTVDFVG…LKKVEWPHLP (86 aa).

It belongs to the FKBP-type PPIase family. Tig subfamily.

It is found in the cytoplasm. It carries out the reaction [protein]-peptidylproline (omega=180) = [protein]-peptidylproline (omega=0). Functionally, involved in protein export. Acts as a chaperone by maintaining the newly synthesized protein in an open conformation. Functions as a peptidyl-prolyl cis-trans isomerase. In Burkholderia mallei (strain NCTC 10229), this protein is Trigger factor.